We begin with the raw amino-acid sequence, 481 residues long: tRNA sulfurtransferase (481 aa).

The THUMP domain occupies 54–156; the sequence is ADGDGPLRHI…GKDVFFYHEI (103 aa). Residues 174–175, Lys256, Gly278, and Gln287 contribute to the ATP site; that span reads LV. An intrachain disulfide couples Cys334 to Cys433. The Rhodanese domain occupies 388–463; it reads IPKDAVIIDL…YYSTFSDLKK (76 aa). The Cysteine persulfide intermediate role is filled by Cys433.

Belongs to the ThiI family.

Its subcellular location is the cytoplasm. It catalyses the reaction [ThiI sulfur-carrier protein]-S-sulfanyl-L-cysteine + a uridine in tRNA + 2 reduced [2Fe-2S]-[ferredoxin] + ATP + H(+) = [ThiI sulfur-carrier protein]-L-cysteine + a 4-thiouridine in tRNA + 2 oxidized [2Fe-2S]-[ferredoxin] + AMP + diphosphate. It carries out the reaction [ThiS sulfur-carrier protein]-C-terminal Gly-Gly-AMP + S-sulfanyl-L-cysteinyl-[cysteine desulfurase] + AH2 = [ThiS sulfur-carrier protein]-C-terminal-Gly-aminoethanethioate + L-cysteinyl-[cysteine desulfurase] + A + AMP + 2 H(+). It functions in the pathway cofactor biosynthesis; thiamine diphosphate biosynthesis. Its function is as follows. Catalyzes the ATP-dependent transfer of a sulfur to tRNA to produce 4-thiouridine in position 8 of tRNAs, which functions as a near-UV photosensor. Also catalyzes the transfer of sulfur to the sulfur carrier protein ThiS, forming ThiS-thiocarboxylate. This is a step in the synthesis of thiazole, in the thiamine biosynthesis pathway. The sulfur is donated as persulfide by IscS. The polypeptide is tRNA sulfurtransferase (Thermoplasma acidophilum (strain ATCC 25905 / DSM 1728 / JCM 9062 / NBRC 15155 / AMRC-C165)).